The chain runs to 313 residues: Ribosomal RNA small subunit methyltransferase H (313 aa).

S-adenosyl-L-methionine-binding positions include 35–37 (GGH), Asp-55, Phe-79, Asp-101, and Gln-108.

The protein belongs to the methyltransferase superfamily. RsmH family.

The protein resides in the cytoplasm. The enzyme catalyses cytidine(1402) in 16S rRNA + S-adenosyl-L-methionine = N(4)-methylcytidine(1402) in 16S rRNA + S-adenosyl-L-homocysteine + H(+). Its function is as follows. Specifically methylates the N4 position of cytidine in position 1402 (C1402) of 16S rRNA. This chain is Ribosomal RNA small subunit methyltransferase H, found in Salmonella newport (strain SL254).